We begin with the raw amino-acid sequence, 224 residues long: Ribose-5-phosphate isomerase A (224 aa).

Substrate is bound by residues 26 to 29 (TGST), 81 to 84 (DGAD), and 94 to 97 (KGGG). Catalysis depends on Glu103, which acts as the Proton acceptor. Lys121 is a binding site for substrate.

This sequence belongs to the ribose 5-phosphate isomerase family. As to quaternary structure, homodimer.

It carries out the reaction aldehydo-D-ribose 5-phosphate = D-ribulose 5-phosphate. It functions in the pathway carbohydrate degradation; pentose phosphate pathway; D-ribose 5-phosphate from D-ribulose 5-phosphate (non-oxidative stage): step 1/1. Its function is as follows. Catalyzes the reversible conversion of ribose-5-phosphate to ribulose 5-phosphate. The sequence is that of Ribose-5-phosphate isomerase A from Listeria monocytogenes serotype 4b (strain F2365).